The sequence spans 615 residues: Peptidoglycan-binding protein YepA (615 aa).

An N-terminal signal peptide occupies residues 1–26; it reads MRNLAALLPALFLLGSSLLPAGTALA.

This sequence belongs to the bacterial solute-binding protein 5 family. As to quaternary structure, the complex is composed of one ATP-binding protein (YejF), two transmembrane proteins (YejB and YejE) and a solute-binding protein (YepA).

The protein localises to the periplasm. Its function is as follows. Part of the ABC transporter complex YejBEF-YepA involved in the uptake of muropeptides, the breakdown products of cell wall peptidoglycan. The import of muropeptides into the cell enables peptidoglycan recycling, which is vital for cell wall integrity in this bacterium. Probably binds muropeptides. The sequence is that of Peptidoglycan-binding protein YepA from Agrobacterium fabrum (strain C58 / ATCC 33970) (Agrobacterium tumefaciens (strain C58)).